The chain runs to 608 residues: Chaperone protein HtpG (608 aa).

Positions 1-332 are a; substrate-binding; the sequence is MQFQTEVNQL…VEDLPLNVSR (332 aa). The interval 333 to 536 is b; that stretch reads EILQENQILK…KNKLDFAMQQ (204 aa). Positions 537–608 are c; sequence LLKQMGQEQN…LTKIINKAFS (72 aa).

The protein belongs to the heat shock protein 90 family. In terms of assembly, homodimer.

The protein resides in the cytoplasm. Its function is as follows. Molecular chaperone. Has ATPase activity. In Campylobacter jejuni subsp. doylei (strain ATCC BAA-1458 / RM4099 / 269.97), this protein is Chaperone protein HtpG.